Consider the following 104-residue polypeptide: Interferon alpha-inducible protein 27-like protein 1 (104 aa).

Helical transmembrane passes span 14-34 (VAAV…LSAM), 59-79 (GGGV…AAGL), and 81-101 (VTSK…LGSP).

The protein belongs to the IFI6/IFI27 family.

The protein resides in the membrane. In terms of biological role, plays a role in the apoptotic process and has a pro-apoptotic activity. The sequence is that of Interferon alpha-inducible protein 27-like protein 1 from Homo sapiens (Human).